The primary structure comprises 1429 residues: Nitric oxide synthase 1 (1429 aa).

The segment at 1-200 (MEEHTFGVQQ…LQDSGEQDEL (200 aa)) is interaction with NOSIP. Residues 17–99 (SVRLFKRKVG…ETHVVLILRG (83 aa)) enclose the PDZ domain. Disordered regions lie at residues 114-174 (DGTP…SVSQ) and 271-298 (NNPY…SRCP). The segment at 163 to 240 (QGRGQGAGSV…TGIQVDRDLD (78 aa)) is interaction with DYNLL1/PIN. The segment covering 272 to 294 (NPYSENEQSPASGKQSPTKNGSP) has biased composition (polar residues). Residue Ser-280 is modified to Phosphoserine. Ser-334 is a (6R)-L-erythro-5,6,7,8-tetrahydrobiopterin binding site. Residue Cys-415 coordinates heme b. 4 residues coordinate L-arginine: Gln-478, Trp-587, Tyr-588, and Glu-592. The (6R)-L-erythro-5,6,7,8-tetrahydrobiopterin site is built by Val-677, Trp-678, and Phe-691. Tyr-706 serves as a coordination point for heme b. The calmodulin-binding stretch occupies residues 725 to 745 (KRRAIGFKKLAEAVKFSAKLM). Residues 755 to 935 (ATILYATETG…AFRTWAKKVF (181 aa)) enclose the Flavodoxin-like domain. Residues Thr-761, Glu-762, Thr-763, Lys-765, Ser-766, Ser-807, Thr-808, and Gly-812 each coordinate FMN. Ser-847, Ser-857, and Ser-858 each carry phosphoserine. Ser-886, His-891, Cys-893, Glu-919, and Gln-923 together coordinate FMN. The 248-residue stretch at 990-1237 (KRVSAARLLS…VRGAPSFHLP (248 aa)) folds into the FAD-binding FR-type domain. Arg-1010 is an NADP(+) binding site. FAD contacts are provided by His-1032, Arg-1173, Tyr-1174, Tyr-1175, Ser-1176, Thr-1191, and Ala-1193. Ser-1196 contacts NADP(+). The FAD site is built by Tyr-1197, Val-1210, Cys-1211, and Ser-1212. NADP(+)-binding residues include Thr-1251, Arg-1284, Ser-1313, Arg-1314, Lys-1320, Tyr-1322, Gln-1324, Asp-1357, Thr-1398, and Arg-1400.

It belongs to the NOS family. Homodimer. Interacts with DLG4; the interaction possibly being prevented by the association between NOS1 and CAPON. Forms a ternary complex with CAPON and RASD1. Forms a ternary complex with CAPON and SYN1. Interacts with ZDHHC23. Interacts with NOSIP; which may impair its synaptic location. Interacts with HTR4. Interacts with VAC14. Interacts (via N-terminal domain) with DLG4 (via N-terminal tandem pair of PDZ domains). Interacts with SLC6A4. Forms a complex with ASL, ASS1 and SLC7A1; the complex regulates cell-autonomous L-arginine synthesis and citrulline recycling while channeling extracellular L-arginine to nitric oxide synthesis pathway. Interacts with DMD; localizes NOS1 to sarcolemma in muscle cells. Interacts with DYNLL1; inhibits the nitric oxide synthase activity. Heme b is required as a cofactor. FAD serves as cofactor. The cofactor is FMN. It depends on (6R)-L-erythro-5,6,7,8-tetrahydrobiopterin as a cofactor. Post-translationally, ubiquitinated; mediated by STUB1/CHIP in the presence of Hsp70 and Hsp40 (in vitro). In terms of tissue distribution, widely expressed in the nervous system: expressed in cerebrum, olfactory bulb, hippocampus, midbrain, cerebellum, pons, medulla oblongata, and spinal cord. Also found in skeletal muscle, where it is localized beneath the sarcolemma of fast twitch muscle fibers, and in spleen, heart, kidney, and liver. N-NOS-1 and N-NOS-2 are found in all parts of the nervous system. NNOS beta and gamma occur in a region-specific manner in the brain and NNOS beta expression is developmentally regulated. NNOS Mu is only found in mature skeletal and cardiac muscles.

It is found in the cell membrane. The protein resides in the sarcolemma. Its subcellular location is the cell projection. The protein localises to the dendritic spine. The enzyme catalyses 2 L-arginine + 3 NADPH + 4 O2 + H(+) = 2 L-citrulline + 2 nitric oxide + 3 NADP(+) + 4 H2O. Its activity is regulated as follows. Stimulated by calcium/calmodulin. Inhibited by DYNLL1 that prevents the dimerization of the protein. Inhibited by NOSIP. In terms of biological role, produces nitric oxide (NO) which is a messenger molecule with diverse functions throughout the body. In the brain and peripheral nervous system, NO displays many properties of a neurotransmitter. Probably has nitrosylase activity and mediates cysteine S-nitrosylation of cytoplasmic target proteins such SRR. Isoform NNOS Mu may be an effector enzyme for the dystrophin complex. The sequence is that of Nitric oxide synthase 1 from Mus musculus (Mouse).